Here is a 94-residue protein sequence, read N- to C-terminus: Co-chaperonin GroES (94 aa).

This sequence belongs to the GroES chaperonin family. As to quaternary structure, heptamer of 7 subunits arranged in a ring. Interacts with the chaperonin GroEL.

It localises to the cytoplasm. In terms of biological role, together with the chaperonin GroEL, plays an essential role in assisting protein folding. The GroEL-GroES system forms a nano-cage that allows encapsulation of the non-native substrate proteins and provides a physical environment optimized to promote and accelerate protein folding. GroES binds to the apical surface of the GroEL ring, thereby capping the opening of the GroEL channel. In Listeria innocua serovar 6a (strain ATCC BAA-680 / CLIP 11262), this protein is Co-chaperonin GroES.